The sequence spans 523 residues: Cytoplasmic dynein 1 light intermediate chain 1 (523 aa).

Residues 1–25 (MAAVGRVGSFGSSPPGLSSTYTGGP) are disordered. A compositionally biased stretch (low complexity) spans 9-19 (SFGSSPPGLSS). 74–81 (GEDGAGKT) lines the ATP pocket. Position 207 is a phosphoserine (Ser-207). Thr-213 bears the Phosphothreonine mark. Disordered regions lie at residues 387–434 (PPTA…DPNM) and 456–523 (TGSP…GEAS). A phosphoserine mark is found at Ser-398 and Ser-405. Residue Thr-408 is modified to Phosphothreonine. Ser-412, Ser-419, Ser-421, and Ser-427 each carry phosphoserine. A compositionally biased stretch (low complexity) spans 412–421 (SVSSNVASVS). The segment covering 458–478 (SPGGPGVSGGSPAGGAGGGSS) has biased composition (gly residues). Ser-487 carries the phosphoserine modification. The span at 493–503 (LDVHAELDRIT) shows a compositional bias: basic and acidic residues. Positions 506-523 (PVTVSPTTPTSPTEGEAS) are enriched in low complexity. Ser-510 carries the post-translational modification Phosphoserine. Thr-512, Thr-513, and Thr-515 each carry phosphothreonine. At Ser-516 the chain carries Phosphoserine.

This sequence belongs to the dynein light intermediate chain family. Homodimer. The cytoplasmic dynein 1 complex consists of two catalytic heavy chains (HCs) and a number of non-catalytic subunits presented by intermediate chains (ICs), light intermediate chains (LICs) and light chains (LCs); the composition seems to vary in respect to the IC, LIC and LC composition. The heavy chain homodimer serves as a scaffold for the probable homodimeric assembly of the respective non-catalytic subunits. The ICs and LICs bind directly to the HC dimer and the LCs assemble on the IC dimer. Self-associates. Interacts with DYNC1H1; DYNC1LI1 and DYNC1LI2 bind mutually exclusive to DYNC1H1. Interacts with PCNT. Forms a complex with RAB11FIP3 and RAB11A1; the interaction between DYNC1LI1 and RAB11FIP3 is direct and induces DYNC1LI1 localization onto endosomal membrane; the complex regulates endocytic trafficking. Interacts with RUFY3. As to quaternary structure, (Microbial infection) Interacts with human adenovirus 5 hexon protein; this interaction probably allows virus intracellular transport. In terms of processing, phosphorylated during mitosis but not in interphase.

The protein resides in the cytoplasm. It is found in the chromosome. Its subcellular location is the centromere. The protein localises to the kinetochore. It localises to the cytoskeleton. The protein resides in the spindle pole. It is found in the recycling endosome membrane. Acts as one of several non-catalytic accessory components of the cytoplasmic dynein 1 complex that are thought to be involved in linking dynein to cargos and to adapter proteins that regulate dynein function. Cytoplasmic dynein 1 acts as a motor for the intracellular retrograde motility of vesicles and organelles along microtubules. May play a role in binding dynein to membranous organelles or chromosomes. Probably involved in the microtubule-dependent transport of pericentrin. Is required for progress through the spindle assembly checkpoint. The phosphorylated form appears to be involved in the selective removal of MAD1L1 and MAD1L2 but not BUB1B from kinetochores. Forms a functional Rab11/RAB11FIP3/dynein complex onto endosomal membrane that regulates the movement of peripheral sorting endosomes (SE) along microtubule tracks toward the microtubule organizing center/centrosome, generating the endosomal recycling compartment (ERC). This Homo sapiens (Human) protein is Cytoplasmic dynein 1 light intermediate chain 1 (DYNC1LI1).